We begin with the raw amino-acid sequence, 285 residues long: Protein HEXIM1 (285 aa).

Disordered regions lie at residues 1-56 (MSEV…QNPG) and 132-196 (LMED…LQKD). The segment covering 23-36 (GGWHHPVEREEHPV) has biased composition (basic and acidic residues). Over residues 168–180 (TDDDLEEEEDEAG) the composition is skewed to acidic residues. Positions 213–284 (SKQDLIKEYL…QEGKQVAADS (72 aa)) form a coiled coil.

It belongs to the HEXIM family. Homooligomer and heterooligomer. Core component of the 7SK RNP complex.

It localises to the nucleus. Its subcellular location is the cytoplasm. Transcriptional regulator which functions as a general RNA polymerase II transcription inhibitor. Core component of the 7SK RNP complex: in cooperation with 7SK snRNA sequesters P-TEFb in a large inactive 7SK snRNP complex preventing RNA polymerase II phosphorylation and subsequent transcriptional elongation. Plays a role in the regulation of DNA virus-mediated innate immune response by assembling into the HDP-RNP complex, a complex that serves as a platform for IRF3 phosphorylation and subsequent innate immune response activation through the cGAS-STING pathway. This chain is Protein HEXIM1 (hexim1), found in Xenopus laevis (African clawed frog).